The following is a 396-amino-acid chain: Tryptophan synthase beta chain (396 aa).

N6-(pyridoxal phosphate)lysine is present on lysine 86.

The protein belongs to the TrpB family. In terms of assembly, tetramer of two alpha and two beta chains. It depends on pyridoxal 5'-phosphate as a cofactor.

The enzyme catalyses (1S,2R)-1-C-(indol-3-yl)glycerol 3-phosphate + L-serine = D-glyceraldehyde 3-phosphate + L-tryptophan + H2O. Its pathway is amino-acid biosynthesis; L-tryptophan biosynthesis; L-tryptophan from chorismate: step 5/5. The beta subunit is responsible for the synthesis of L-tryptophan from indole and L-serine. In Aliivibrio fischeri (strain ATCC 700601 / ES114) (Vibrio fischeri), this protein is Tryptophan synthase beta chain.